A 133-amino-acid polypeptide reads, in one-letter code: Peptide methionine sulfoxide reductase MsrB (133 aa).

The region spanning L8–R130 is the MsrB domain. Residues C47, C50, C96, and C99 each contribute to the Zn(2+) site. Catalysis depends on C119, which acts as the Nucleophile.

It belongs to the MsrB Met sulfoxide reductase family. It depends on Zn(2+) as a cofactor.

The enzyme catalyses L-methionyl-[protein] + [thioredoxin]-disulfide + H2O = L-methionyl-(R)-S-oxide-[protein] + [thioredoxin]-dithiol. The sequence is that of Peptide methionine sulfoxide reductase MsrB from Azotobacter vinelandii (strain DJ / ATCC BAA-1303).